Consider the following 169-residue polypeptide: Anaerobic nitrite reductase NSHB2 (169 aa).

Positions 16-166 constitute a Globin domain; the sequence is SFSEEQEALV…LVAAIKQEMK (151 aa). Residues 49 to 53 carry the Homodimerization motif; sequence EVAPS. Residues S59, K73, H77, R107, T111, and H112 each contribute to the heme b site. The Homodimerization motif lies at 119-131; sequence DAHFEVTRFALLE.

The protein belongs to the plant globin family. Homodimer. Requires heme b as cofactor. In terms of tissue distribution, expressed in leaves, but not in roots. Present in embryonic organs including embryos, coleoptiles and seminal roots.

The protein localises to the cytoplasm. The protein resides in the nucleus. It carries out the reaction Fe(III)-heme b-[protein] + nitric oxide + H2O = Fe(II)-heme b-[protein] + nitrite + 2 H(+). Functionally, phytoglobin that reduces nitrite to nitric oxide under anoxic conditions (e.g. during flooding or in waterlogged soil). May not function as an oxygen storage or transport protein. Has an unusually high affinity for O(2) through an hexacoordinate heme iron because of a very low dissociation constant. Promotes tolerance to low potassium K(+) conditions. The protein is Anaerobic nitrite reductase NSHB2 of Oryza sativa subsp. japonica (Rice).